An 837-amino-acid chain; its full sequence is V-type proton ATPase 116 kDa subunit a 1 (837 aa).

Residues 1-388 (MGELFRSEEM…DAYGIGTYRE (388 aa)) lie on the Cytoplasmic side of the membrane. Phosphothreonine occurs at positions 250 and 360. Phosphotyrosine is present on Tyr-364. The chain crosses the membrane as a helical span at residues 389–407 (INPAPYTIITFPFLFAVMF). The Vacuolar segment spans residues 408–409 (GD). Residues 410-426 (FGHGILMTLFAVWMVLR) form a helical membrane-spanning segment. The Cytoplasmic portion of the chain corresponds to 427–441 (ESRILSQKNENEMFS). The chain crosses the membrane as a helical span at residues 442–471 (TVFSGRYIILLMGVFSMYTGLIYNDCFSKS). Residues 472-534 (LNIFGSSWSV…ATNKLTFLNS (63 aa)) lie on the Vacuolar side of the membrane. A helical membrane pass occupies residues 535–554 (FKMKMSVILGIIHMLFGVSL). Residues 555 to 572 (SLFNHIYFKKPLNIYFGF) lie on the Cytoplasmic side of the membrane. The helical transmembrane segment at 573–593 (IPEIIFMTSLFGYLVILIFYK) threads the bilayer. Residues 594 to 638 (WTAYDAHTSENAPSLLIHFINMFLFSYPESGYSMLYSGQKGIQCF) lie on the Vacuolar side of the membrane. The helical transmembrane segment at 639-658 (LVVVALLCVPWMLLFKPLVL) threads the bilayer. Over 659–724 (RRQYLRRKHL…ATMVHQAIHT (66 aa)) the chain is Cytoplasmic. The helical transmembrane segment at 725–749 (IEYCLGCISNTASYLRLWALSLAHA) threads the bilayer. At 750–770 (QLSEVLWTMVIHIGLSVKSLA) the chain is on the vacuolar side. Residues 771-809 (GGLVLFFFFTAFATLTVAILLIMEGLSAFLHALRLHWVE) traverse the membrane as a helical segment. Residues 810–837 (FQNKFYSGTGFKFLPFSFEHIREGKFGE) are Cytoplasmic-facing.

It belongs to the V-ATPase 116 kDa subunit family. As to quaternary structure, V-ATPase is a heteromultimeric enzyme made up of two complexes: the ATP-hydrolytic V1 complex and the proton translocation V0 complex. The V1 complex consists of three catalytic AB heterodimers that form a heterohexamer, three peripheral stalks each consisting of EG heterodimers, one central rotor including subunits D and F, and the regulatory subunits C and H. The proton translocation complex V0 consists of the proton transport subunit a, a ring of proteolipid subunits c9c'', rotary subunit d, subunits e and f, and the accessory subunits ATP6AP1/Ac45 and ATP6AP2/PRR. Interacts with SPAAR.

Its subcellular location is the cytoplasmic vesicle. It is found in the clathrin-coated vesicle membrane. The protein resides in the secretory vesicle. It localises to the synaptic vesicle membrane. The protein localises to the melanosome. Subunit of the V0 complex of vacuolar(H+)-ATPase (V-ATPase), a multisubunit enzyme composed of a peripheral complex (V1) that hydrolyzes ATP and a membrane integral complex (V0) that translocates protons. V-ATPase is responsible for the acidification of various organelles, such as lysosomes, endosomes, the trans-Golgi network, and secretory granules, including synaptic vesicles. In certain cell types, can be exported to the plasma membrane, where it is involved in the acidification of the extracellular environment. Required for assembly and activity of the vacuolar ATPase. Through its action on compartment acidification, plays an essential role in neuronal development in terms of integrity and connectivity of neurons. This Pongo abelii (Sumatran orangutan) protein is V-type proton ATPase 116 kDa subunit a 1 (ATP6V0A1).